The following is a 427-amino-acid chain: Gustatory receptor for sugar taste 43a (427 aa).

At 1-37 (MEISQPSIGIFYISKVLALAPYATVRNSKGRVEIGRS) the chain is on the cytoplasmic side. Residues 38-63 (WLFTVYSATLTVVMVFLTYRGLLFDA) traverse the membrane as a helical segment. The Extracellular portion of the chain corresponds to 64–75 (NSEIPVRMKSAT). R70 and D83 together coordinate beta-D-fructose. A helical membrane pass occupies residues 76-96 (SKVVTALDVSVVVMAIVSGVY). Over 97–135 (CGLFSLNDTLELNDRLNKIDNTLNAYNNFRRDRWRALGM) the chain is Cytoplasmic. A helical membrane pass occupies residues 136–158 (AAVSLLAISILVGLDVGTWMRIA). The Extracellular portion of the chain corresponds to 159 to 168 (QDMNIAQSDT). Residues 169–193 (ELNVHWYIPFYSLYFILTGLQVNIA) traverse the membrane as a helical segment. Residue Y182 coordinates beta-D-fructose. Topologically, residues 194–293 (NTAYGLGRRF…CVHLLSNSFG (100 aa)) are cytoplasmic. A helical transmembrane segment spans residues 294–316 (IAVLFILVSCLLHLVATAYFLFL). Beta-D-fructose is bound at residue T310. The Extracellular segment spans residues 317-324 (ELLSKRDN). The helical transmembrane segment at 325–346 (GYLWVQMLWICFHFLRLLMVVE) threads the bilayer. Residue H337 coordinates beta-D-fructose. Over 347–402 (PCHLAARESRKTIQIVCEIERKVHEPILAEAVKKFWQQLLVVDADFSACGLCRVNR) the chain is Cytoplasmic. Residues 403–423 (TILTSFASAIATYLVILIQFQ) traverse the membrane as a helical segment. Q421 serves as a coordination point for Ca(2+). The Extracellular portion of the chain corresponds to 424 to 427 (RTNG).

Belongs to the insect chemoreceptor superfamily. Gustatory receptor (GR) family. Gr21a subfamily. As to quaternary structure, homotetramer. In terms of tissue distribution, expressed in the adult labellar chemosensory neurons and in the adult head, abdomen, leg and wing. In larvae, is expressed in taste organs, as well as the brain and the gastrointestinal system.

Its subcellular location is the cell membrane. Its function is as follows. Gustatory receptor which mediates acceptance or avoidance behavior, depending on its substrates. Gr43a is the main sugar receptor in larvae. Functions as a narrowly tuned fructose receptor in taste neurons but also as a fructose receptor in the brain. Necessary and sufficient to sense hemolymph fructose and promote feeding in hungry flies but suppress feeding in satiated flies. The polypeptide is Gustatory receptor for sugar taste 43a (Gr43a) (Drosophila melanogaster (Fruit fly)).